Reading from the N-terminus, the 149-residue chain is Large ribosomal subunit protein bL9 (149 aa).

It belongs to the bacterial ribosomal protein bL9 family.

Functionally, binds to the 23S rRNA. This Bacillus licheniformis (strain ATCC 14580 / DSM 13 / JCM 2505 / CCUG 7422 / NBRC 12200 / NCIMB 9375 / NCTC 10341 / NRRL NRS-1264 / Gibson 46) protein is Large ribosomal subunit protein bL9.